The sequence spans 927 residues: Autophagy-related protein 18h (927 aa).

2 disordered regions span residues 1-25 (MKSN…NGTN) and 333-353 (DGPG…VGSH). Residues 335–344 (PGPSLSSSPG) are compositionally biased toward low complexity. WD repeat units lie at residues 379–419 (AHTS…TKNG) and 441–482 (MTSA…NVLE). Disordered regions lie at residues 750 to 788 (NRGF…EERR) and 844 to 927 (IENS…SEEG). Residues 846 to 859 (NSSGISGDSNVSSN) show a composition bias toward low complexity. Basic and acidic residues predominate over residues 896–907 (ETEHKDAPSDGK).

The protein belongs to the WD repeat PROPPIN family. Component of the PI(3,5)P2 regulatory complex at least composed of ATG18, SAC/FIG4, FAB1 and VAC14. As to expression, expressed in roots, flowers and leaves.

The protein localises to the preautophagosomal structure membrane. The protein resides in the vacuole membrane. In terms of biological role, the PI(3,5)P2 regulatory complex regulates both the synthesis and turnover of phosphatidylinositol 3,5-bisphosphate (PtdIns(3,5)P2). Required for autophagy. The chain is Autophagy-related protein 18h (ATG18H) from Arabidopsis thaliana (Mouse-ear cress).